A 234-amino-acid polypeptide reads, in one-letter code: DNA repair protein RecO (234 aa).

It belongs to the RecO family.

Its function is as follows. Involved in DNA repair and RecF pathway recombination. The polypeptide is DNA repair protein RecO (Hamiltonella defensa subsp. Acyrthosiphon pisum (strain 5AT)).